The sequence spans 780 residues: ATP-dependent 6-phosphofructokinase, muscle type (780 aa).

An N-acetylthreonine modification is found at T2. Residues 2-390 (THEEHHAAKS…NWEVYKLLAH (389 aa)) form an N-terminal catalytic PFK domain 1 region. Residues G25, 88 to 89 (RC), and 118 to 121 (GDGS) each bind ATP. A Mg(2+)-binding site is contributed by D119. Residues 164–166 (SID), R201, 208–210 (MGR), E264, R292, and 298–301 (HVQR) each bind substrate. D166 acts as the Proton acceptor in catalysis. At S377 the chain carries Phosphoserine. The interval 391–401 (VRPPVTKSGSY) is interdomain linker. The tract at residues 402 to 780 (TVAVMNVGAP…TRKRSGEATI (379 aa)) is C-terminal regulatory PFK domain 2. Beta-D-fructose 2,6-bisphosphate contacts are provided by residues R471 and 528–532 (TVSNN). S530 carries O-linked (GlcNAc) serine glycosylation. N6-(2-hydroxyisobutyryl)lysine is present on K557. Beta-D-fructose 2,6-bisphosphate contacts are provided by residues R566, 573–575 (MGG), E629, R655, and 661–664 (HMQQ). S667 bears the Phosphoserine mark. R735 is a beta-D-fructose 2,6-bisphosphate binding site. The residue at position 775 (S775) is a Phosphoserine.

Belongs to the phosphofructokinase type A (PFKA) family. ATP-dependent PFK group I subfamily. Eukaryotic two domain clade 'E' sub-subfamily. Homo- and heterotetramers. Phosphofructokinase (PFK) enzyme functions as a tetramer composed of different combinations of 3 types of subunits, called PFKM (M), PFKL (L) and PFKP (P). The composition of the PFK tetramer differs according to the tissue type it is present in. The kinetic and regulatory properties of the tetrameric enzyme are dependent on the subunit composition, hence can vary across tissues. Interacts (via C-terminus) with HK1 (via N-terminal spermatogenic cell-specific region). Mg(2+) serves as cofactor. Post-translationally, glcNAcylation decreases enzyme activity.

The protein localises to the cytoplasm. It carries out the reaction beta-D-fructose 6-phosphate + ATP = beta-D-fructose 1,6-bisphosphate + ADP + H(+). Its pathway is carbohydrate degradation; glycolysis; D-glyceraldehyde 3-phosphate and glycerone phosphate from D-glucose: step 3/4. With respect to regulation, allosterically activated by ADP, AMP, or fructose 2,6-bisphosphate, and allosterically inhibited by ATP or citrate. Functionally, catalyzes the phosphorylation of D-fructose 6-phosphate to fructose 1,6-bisphosphate by ATP, the first committing step of glycolysis. The polypeptide is ATP-dependent 6-phosphofructokinase, muscle type (PFKM) (Sus scrofa (Pig)).